We begin with the raw amino-acid sequence, 472 residues long: GTPase Der (472 aa).

EngA-type G domains follow at residues 3 to 166 and 188 to 361; these read PIIA…IQNN and IKLA…HCST. Residues 9-16, 56-60, 118-121, 194-201, 241-245, and 306-309 each bind GTP; these read GRPNVGKS, DTGGI, NKID, GSSNVGKS, DTAGL, and NKWD. The region spanning 362 to 446 is the KH-like domain; sequence KRISTALLTK…PIRIQFNEPA (85 aa).

This sequence belongs to the TRAFAC class TrmE-Era-EngA-EngB-Septin-like GTPase superfamily. EngA (Der) GTPase family. As to quaternary structure, associates with the 50S ribosomal subunit.

Functionally, GTPase that plays an essential role in the late steps of ribosome biogenesis. The protein is GTPase Der of Baumannia cicadellinicola subsp. Homalodisca coagulata.